The following is a 531-amino-acid chain: Beta-hexosaminidase subunit beta (531 aa).

Positions 1–21 (MEVLPGLLRLLAALVVAERWA) are cleaved as a signal peptide. Cys-67 and Cys-111 form a disulfide bridge. Asn-120, Asn-164, and Asn-301 each carry an N-linked (GlcNAc...) asparagine glycan. 2 disulfide bridges follow: Cys-283/Cys-334 and Cys-508/Cys-525. Glu-329 (proton donor) is an active-site residue.

It belongs to the glycosyl hydrolase 20 family. In terms of assembly, there are 3 forms of beta-hexosaminidase: hexosaminidase A is a heterodimer composed of one subunit alpha and one subunit beta (chain A and B); hexosaminidase B is a homodimer of two beta subunits (two chains A and B); hexosaminidase S is a homodimer of two alpha subunits. The composition of the dimer (isozyme A versus isozyme S) has a significant effect on the substrate specificity of the alpha subunit active site.

It is found in the lysosome. It localises to the cytoplasmic vesicle. Its subcellular location is the secretory vesicle. The protein resides in the cortical granule. It carries out the reaction Hydrolysis of terminal non-reducing N-acetyl-D-hexosamine residues in N-acetyl-beta-D-hexosaminides.. The enzyme catalyses N-acetyl-beta-D-galactosaminyl-(1-&gt;4)-beta-D-3-sulfogalactosyl-(1-&gt;4)-beta-D-glucosyl-(1&lt;-&gt;1')-ceramide + H2O = a beta-D-3-sulfogalactosyl-(1-&gt;4)-beta-D-glucosyl-(1&lt;-&gt;1')-ceramide + N-acetyl-beta-D-galactosamine. It catalyses the reaction a ganglioside GM2 (d18:1(4E)) + H2O = a ganglioside GM3 (d18:1(4E)) + N-acetyl-beta-D-galactosamine. The catalysed reaction is a ganglioside GM2 + H2O = a ganglioside GM3 + N-acetyl-beta-D-galactosamine. It carries out the reaction beta-D-GalNAc-(1-&gt;4)-alpha-L-IdoA-(1-&gt;3)-beta-D-GalNAc-4-sulfate-(1-&gt;4)-alpha-L-IdoA-(1-&gt;3)-D-GalNAc-4-sulfate + H2O = alpha-L-IdoA-(1-&gt;3)-beta-D-GalNAc-4-sulfate-(1-&gt;4)-alpha-L-IdoA-(1-&gt;3)-D-GalNAc-4-sulfate + N-acetyl-D-galactosamine. The enzyme catalyses N-acetyl-beta-D-6-sulfogalactosaminyl-(1-&gt;4)-alpha-L-iduronyl-(1-&gt;3)-N-acetyl-D-6-sulfogalactosamine + H2O = alpha-L-iduronyl-(1-&gt;3)-N-acetyl-D-6-sulfogalactosamine + N-acetyl-D-6-sulfogalactosamine. Addition of GM2A stimulates the hydrolysis of sulfated glycosphingolipid SM2 and the ganglioside GM2. In terms of biological role, hydrolyzes the non-reducing end N-acetyl-D-hexosamine and/or sulfated N-acetyl-D-hexosamine of glycoconjugates, such as the oligosaccharide moieties from proteins and neutral glycolipids, or from certain mucopolysaccharides. The isozyme B does not hydrolyze each of these substrates, however hydrolyzes efficiently neutral oligosaccharide. Only the isozyme A is responsible for the degradation of GM2 gangliosides in the presence of GM2A. During fertilization is responsible, at least in part, for the zona block to polyspermy. Present in the cortical granules of non-activated oocytes, is exocytosed during the cortical reaction in response to oocyte activation and inactivates the sperm galactosyltransferase-binding site, accounting for the block in sperm binding to the zona pellucida. In Sus scrofa (Pig), this protein is Beta-hexosaminidase subunit beta.